Reading from the N-terminus, the 140-residue chain is Odorant-binding protein 10 (140 aa).

The signal sequence occupies residues 1 to 25 (MTSFRLANLTVFLVLLFCFMRGVHS).

This sequence belongs to the PBP/GOBP family. In terms of tissue distribution, high-level expression in female mouth parts, particularly in the proboscis (at protein level). Low-level expression in female antenna (at protein level). Female salivary gland. Female chemosensory organs: antenna, palp and proboscis. Male antenna, wing and maxillary palp. Expressed at higher levels in male tissues compared to female tissues. Not detected in midgut.

The protein resides in the secreted. Involved in modulation of blood-feeding behavior and capacity in female mosquitoes. Required for normal oviposition. Required for normal fecundity and fertility of female mosquitoes. Required for normal expression of VGA1 gene, which encodes the egg yolk protein vitellogenin-A1. Required for normal female longevity when mosquitoes are maintained on regular sugar meal. In terms of biological role, (Microbial infection) Facilitates shedding of dengue virus type 2 particles into mosquito saliva. Does not affect dengue virus type 2 replication or infection prevalence in midgut and salivary glands at 14 days after blood feeding. Functionally, (Microbial infection) Facilitates shedding of Zika virus particles into mosquito saliva. Does not affect Zika virus replication or infection prevalence in midgut and salivary glands at 14 days after blood feeding. The chain is Odorant-binding protein 10 from Aedes aegypti (Yellowfever mosquito).